The primary structure comprises 358 residues: MIDAIYNGGLNLVAASWWTGAAWPVIWNLIKIICVVLPLLGAVAYLTLWERKLLGFMQVRFGPNRVGPFGLLQPIADALKLLTKELIQPAAAAKGLFYLGPVMAIMPALGAWAVIPFGPDLALANVNAGLLLVMAITSIEVYGVIIAGWASNSKYAFLGALRASAQMVSYEIAMGFCFLVVIMVSGSMNLTEIVAVQGRGTMTDMGLGFLSWNWLPLFPIFIVYLISVVAEVNRHPFDVVEGEAEIVAGHMVEYSGMGFAIFFLAEYASMWLVSILAVVMFLGGWLPPFDALGFIPGWIWLGIKTFLVVSMFIWIRATFPRFRYDQIMRLGWKIFIPVTLVWLLVVGAWLLSPWNIWK.

8 consecutive transmembrane segments (helical) span residues 29–49, 95–115, 130–150, 176–196, 206–226, 258–280, 297–317, and 334–354; these read LIKI…LTLW, GLFY…WAVI, LLLV…AGWA, FCFL…IVAV, GLGF…VYLI, GFAI…AVVM, GWIW…WIRA, and IFIP…LSPW.

This sequence belongs to the complex I subunit 1 family. In terms of assembly, NDH-1 is composed of 14 different subunits. Subunits NuoA, H, J, K, L, M, N constitute the membrane sector of the complex.

It is found in the cell inner membrane. It carries out the reaction a quinone + NADH + 5 H(+)(in) = a quinol + NAD(+) + 4 H(+)(out). NDH-1 shuttles electrons from NADH, via FMN and iron-sulfur (Fe-S) centers, to quinones in the respiratory chain. The immediate electron acceptor for the enzyme in this species is believed to be ubiquinone. Couples the redox reaction to proton translocation (for every two electrons transferred, four hydrogen ions are translocated across the cytoplasmic membrane), and thus conserves the redox energy in a proton gradient. This subunit may bind ubiquinone. This Acidovorax sp. (strain JS42) protein is NADH-quinone oxidoreductase subunit H.